We begin with the raw amino-acid sequence, 421 residues long: MASAKEISQYLKRFSQLDAKRFAVVKVGGAVLRDDVDALTSSLSFLQEVGLTPIVLHGAGPQLDEELTAVGIQKKTVNGFRVTLPETMAIVRKVFHATNLQLIEALQRNGARATSITGGVFEAHYLDQETYGLVGGISAVNIAPIEASLRAASIPVIASLGETPSGQILNINADVAANELVHVLQPYKIIFLTGTGGLLDADGKIINSINLSTEYEQLIQQPWVYGGMKLKIEQIKHLLDRLPLESSVSITRPADLAKELFTHKGSGTLIRRGERVIRATTWKDLDLPRLQHLIQSSFRRTLIPHYFETTPLLRAYVSENYRAAVILTKLGNVPYLDKFAVLDDAQGEGLGRAVWSIMREETPQLFWRSRHNNQANAFYYAESDGYYKQDHWKIFWNGLHHFQQIQQCVAHCTQHPPTLID.

Residues 1–252 (MASAKEISQY…PLESSVSITR (252 aa)) are acetylglutamate kinase. Substrate is bound by residues 59–60 (AG), R81, and N170. The region spanning 274–420 (ERVIRATTWK…HCTQHPPTLI (147 aa)) is the N-acetyltransferase domain.

The protein in the N-terminal section; belongs to the acetylglutamate kinase family. ArgB subfamily.

The protein localises to the cytoplasm. The catalysed reaction is N-acetyl-L-glutamate + ATP = N-acetyl-L-glutamyl 5-phosphate + ADP. Its pathway is amino-acid biosynthesis; L-arginine biosynthesis; N(2)-acetyl-L-ornithine from L-glutamate: step 2/4. The sequence is that of Acetylglutamate kinase (argB) from Xylella fastidiosa (strain Temecula1 / ATCC 700964).